The primary structure comprises 63 residues: Protein BP4A (63 aa).

In terms of tissue distribution, pollen specific.

This is Protein BP4A (BP4A) from Brassica napus (Rape).